The primary structure comprises 113 residues: MHEMSIALSVVDAITARAREEQAEKVTAIELVAGKLSGVEIESLKFCFSAAVRGTIMEDAELMVTVPLSEGLCEVCGERFAVDGYYTQCPSCGSYKVRIVSGKELSIRSITLE.

His-2 lines the Ni(2+) pocket. Positions 73, 76, 89, and 92 each coordinate Zn(2+).

The protein belongs to the HypA/HybF family.

Functionally, involved in the maturation of [NiFe] hydrogenases. Required for nickel insertion into the metal center of the hydrogenase. The protein is Hydrogenase maturation factor HypA of Prosthecochloris aestuarii (strain DSM 271 / SK 413).